We begin with the raw amino-acid sequence, 124 residues long: TP53-target gene 3 protein (124 aa).

Polar residues predominate over residues 1–11 (MRASPCISQPA). Positions 1–42 (MRASPCISQPAASWHPRPSALRPTAGSGPDTRTPGTVEDGSA) are disordered.

Strongly expressed in testis. Weakly expressed in heart, placenta and skeletal muscle.

Its subcellular location is the cytoplasm. The protein resides in the nucleus. Its function is as follows. May play a significant role in p53/TP53-mediating signaling pathway. This chain is TP53-target gene 3 protein, found in Homo sapiens (Human).